The primary structure comprises 110 residues: Multidrug transporter PA4990 (110 aa).

A run of 4 helical transmembrane segments spans residues 7–27 (LAIA…VAGF), 31–51 (LPLL…VLVM), 58–78 (VVYA…AMFV), and 85–105 (PAAL…QLFS).

Belongs to the drug/metabolite transporter (DMT) superfamily. Small multidrug resistance (SMR) (TC 2.A.7.1) family.

It localises to the cell membrane. In terms of biological role, confers resistance to ethidium bromide, acriflavine and methyl viologen. This is Multidrug transporter PA4990 from Pseudomonas aeruginosa (strain ATCC 15692 / DSM 22644 / CIP 104116 / JCM 14847 / LMG 12228 / 1C / PRS 101 / PAO1).